Consider the following 490-residue polypeptide: Betaine aldehyde dehydrogenase (490 aa).

K(+) contacts are provided by Thr26, Ile27, and Asp93. 150–152 contacts NAD(+); sequence GAW. The active-site Charge relay system is Lys162. 176-179 is a binding site for NAD(+); the sequence is KPSE. Val180 is a binding site for K(+). 230–233 is an NAD(+) binding site; it reads GVAS. Leu246 serves as a coordination point for K(+). Glu252 acts as the Proton acceptor in catalysis. NAD(+) contacts are provided by Gly254, Cys286, and Glu387. Residue Cys286 is the Nucleophile of the active site. Cys286 is subject to Cysteine sulfenic acid (-SOH). Residues Lys457 and Gly460 each coordinate K(+). Glu464 functions as the Charge relay system in the catalytic mechanism.

This sequence belongs to the aldehyde dehydrogenase family. In terms of assembly, dimer of dimers. It depends on K(+) as a cofactor.

The catalysed reaction is betaine aldehyde + NAD(+) + H2O = glycine betaine + NADH + 2 H(+). It participates in amine and polyamine biosynthesis; betaine biosynthesis via choline pathway; betaine from betaine aldehyde: step 1/1. Its function is as follows. Involved in the biosynthesis of the osmoprotectant glycine betaine. Catalyzes the irreversible oxidation of betaine aldehyde to the corresponding acid. The sequence is that of Betaine aldehyde dehydrogenase from Escherichia coli (strain ATCC 8739 / DSM 1576 / NBRC 3972 / NCIMB 8545 / WDCM 00012 / Crooks).